A 195-amino-acid chain; its full sequence is Flavin-dependent monooxygenase, reductase subunit HsaB (195 aa).

FAD contacts are provided by residues 42–46 (PVGFA), 48–49 (QS), 63–65 (CPT), 69–70 (RS), and 95–96 (RF). An NAD(+)-binding site is contributed by 160-163 (FYRG).

It belongs to the non-flavoprotein flavin reductase family. HsaAB monooxygenase consists of an oxygenase component HsaA and a reductase component HsaB.

It carries out the reaction a reduced flavin + NAD(+) = an oxidized flavin + NADH + 2 H(+). It participates in lipid metabolism; steroid biosynthesis. Functionally, catalyzes the reduction of free flavins (FMN or FAD) by NADH. Subsequently, the reduced flavins diffuse to the HsaA oxygenase subunit. The sequence is that of Flavin-dependent monooxygenase, reductase subunit HsaB (hsaB) from Rhodococcus jostii (strain RHA1).